Here is a 401-residue protein sequence, read N- to C-terminus: Heat shock transcription factor, Y-linked (401 aa).

Residues 1-11 (MAHVSSETQDV) show a composition bias toward polar residues. The segment at 1–30 (MAHVSSETQDVSPKDELTASEASTRSPLCE) is disordered. The DNA-binding element occupies 76–194 (LSLNFPRKLW…PQLLVRVKRR (119 aa)).

The protein belongs to the HSF family. As to expression, testis-specific. Present in Sertoli cells and spermatogenic cells (at protein level).

It is found in the nucleus. It localises to the cytoplasm. The polypeptide is Heat shock transcription factor, Y-linked (HSFY1) (Homo sapiens (Human)).